We begin with the raw amino-acid sequence, 301 residues long: 33 kDa chaperonin (301 aa).

Disulfide bonds link Cys239/Cys241 and Cys272/Cys275.

The protein belongs to the HSP33 family. Post-translationally, under oxidizing conditions two disulfide bonds are formed involving the reactive cysteines. Under reducing conditions zinc is bound to the reactive cysteines and the protein is inactive.

The protein localises to the cytoplasm. Its function is as follows. Redox regulated molecular chaperone. Protects both thermally unfolding and oxidatively damaged proteins from irreversible aggregation. Plays an important role in the bacterial defense system toward oxidative stress. The protein is 33 kDa chaperonin of Nostoc punctiforme (strain ATCC 29133 / PCC 73102).